The following is a 473-amino-acid chain: MAQHDFAPAWLNFPTPPSSTKSSLNFEKHSENFSWTENRYDVSRRRHNSSDGFDSGIGRPNGGNFGRKEKNGWRTHGRNGTENINHRGGYHGGNSRSRSSIFHSGKSQGLHENSIPDNETGRKEDKRERRQFEAEDFPSLNPEYEREPNQNKSLAAGVWDYPPNPKSRTPRMLVIKKGNTKDLQLSGFPVAGNLQSQPVKNGTGPSVYKGLVPKPAVPPTKPTQWKSQTKENKVGTSFSHESTYGVGNFNTFKSTAKNISPSTNSVKECNRSNSSSPVDKLNQQPRLTKLTRMRSDKKSEFLKALKRDRVEEEHEDESHAGSEKDDDSFNLHNSNTTHQERDINRNFDENEIPQENGNASMISQQIIRSSTFPQTDVLSSSLEAEHRLLKEMGWQEDSENDETCAPLTEDEMREFQVISEQLQKNGLRKNGILKNGLICDFKFGPWKNSTFKPTIENDDTETSSSDTSDDDDV.

Disordered stretches follow at residues 1–25 (MAQH…SSLN), 44–170 (RRRH…SRTP), and 186–341 (SGFP…HQER). Ser49 is subject to Phosphoserine. Residue Arg87 is modified to Omega-N-methylarginine. A compositionally biased stretch (polar residues) spans 94–117 (NSRSRSSIFHSGKSQGLHENSIPD). Residues 119–133 (ETGRKEDKRERRQFE) are compositionally biased toward basic and acidic residues. 2 stretches are compositionally biased toward polar residues: residues 193 to 204 (NLQSQPVKNGTG) and 248 to 286 (NFNT…QQPR). Ser274, Ser276, Ser322, and Ser381 each carry phosphoserine. A compositionally biased stretch (basic and acidic residues) spans 293 to 329 (MRSDKKSEFLKALKRDRVEEEHEDESHAGSEKDDDSF). The disordered stretch occupies residues 450 to 473 (TFKPTIENDDTETSSSDTSDDDDV). Acidic residues predominate over residues 456-473 (ENDDTETSSSDTSDDDDV).

This sequence belongs to the vasculin family. As to quaternary structure, interacts with GTF2B, GTF2F2, RNA polymerase II and TBP. In terms of tissue distribution, ubiquitously expressed (at protein level).

The protein resides in the nucleus. Functions as a GC-rich promoter-specific transactivating transcription factor. This is Vasculin (Gpbp1) from Mus musculus (Mouse).